Consider the following 333-residue polypeptide: Protein-methionine-sulfoxide reductase catalytic subunit MsrP (333 aa).

Residues 1–43 (MSKQRKLTEADVTPESVFYQRRKVLQALGITAASLALPHNAQA) constitute a signal peptide (tat-type signal). Residues Asn-87, 90 to 91 (YE), Cys-145, Thr-180, Asn-232, Arg-237, and 248 to 250 (GIK) each bind Mo-molybdopterin.

It belongs to the MsrP family. In terms of assembly, heterodimer of a catalytic subunit (MsrP) and a heme-binding subunit (MsrQ). Requires Mo-molybdopterin as cofactor. In terms of processing, predicted to be exported by the Tat system. The position of the signal peptide cleavage has not been experimentally proven.

The protein resides in the periplasm. It carries out the reaction L-methionyl-[protein] + a quinone + H2O = L-methionyl-(S)-S-oxide-[protein] + a quinol. The catalysed reaction is L-methionyl-[protein] + a quinone + H2O = L-methionyl-(R)-S-oxide-[protein] + a quinol. In terms of biological role, part of the MsrPQ system that repairs oxidized periplasmic proteins containing methionine sulfoxide residues (Met-O), using respiratory chain electrons. Thus protects these proteins from oxidative-stress damage caused by reactive species of oxygen and chlorine generated by the host defense mechanisms. MsrPQ is essential for the maintenance of envelope integrity under bleach stress, rescuing a wide series of structurally unrelated periplasmic proteins from methionine oxidation. The catalytic subunit MsrP is non-stereospecific, being able to reduce both (R-) and (S-) diastereoisomers of methionine sulfoxide. The chain is Protein-methionine-sulfoxide reductase catalytic subunit MsrP from Serratia proteamaculans (strain 568).